The chain runs to 704 residues: Glycine--tRNA ligase beta subunit (704 aa).

The protein belongs to the class-II aminoacyl-tRNA synthetase family. In terms of assembly, tetramer of two alpha and two beta subunits.

Its subcellular location is the cytoplasm. It carries out the reaction tRNA(Gly) + glycine + ATP = glycyl-tRNA(Gly) + AMP + diphosphate. The protein is Glycine--tRNA ligase beta subunit of Rhizobium etli (strain ATCC 51251 / DSM 11541 / JCM 21823 / NBRC 15573 / CFN 42).